Reading from the N-terminus, the 203-residue chain is Holliday junction branch migration complex subunit RuvA (203 aa).

The domain I stretch occupies residues 1 to 64 (MIGRLRGYIL…EDAQLLYGFN (64 aa)). Residues 65 to 142 (DKQERALFRE…KGLNGDLFNN (78 aa)) are domain II. Residues 143 to 154 (SSEITLPTAAQA) form a flexible linker region. The tract at residues 155 to 203 (AELDAEAEAASALVALGYKPQEASRMVSKIAKPGADCETLIRDALRAAL) is domain III.

The protein belongs to the RuvA family. As to quaternary structure, homotetramer. Forms an RuvA(8)-RuvB(12)-Holliday junction (HJ) complex. HJ DNA is sandwiched between 2 RuvA tetramers; dsDNA enters through RuvA and exits via RuvB. An RuvB hexamer assembles on each DNA strand where it exits the tetramer. Each RuvB hexamer is contacted by two RuvA subunits (via domain III) on 2 adjacent RuvB subunits; this complex drives branch migration. In the full resolvosome a probable DNA-RuvA(4)-RuvB(12)-RuvC(2) complex forms which resolves the HJ.

The protein resides in the cytoplasm. The RuvA-RuvB-RuvC complex processes Holliday junction (HJ) DNA during genetic recombination and DNA repair, while the RuvA-RuvB complex plays an important role in the rescue of blocked DNA replication forks via replication fork reversal (RFR). RuvA specifically binds to HJ cruciform DNA, conferring on it an open structure. The RuvB hexamer acts as an ATP-dependent pump, pulling dsDNA into and through the RuvAB complex. HJ branch migration allows RuvC to scan DNA until it finds its consensus sequence, where it cleaves and resolves the cruciform DNA. This chain is Holliday junction branch migration complex subunit RuvA, found in Serratia proteamaculans (strain 568).